The primary structure comprises 380 residues: Outer membrane protein 40 (380 aa).

Positions 1 to 21 (MKAKSLLLALAGLACTFSATA) are cleaved as a signal peptide. Gln22 carries the pyrrolidone carboxylic acid modification. In terms of domain architecture, OmpA-like spans 270–380 (PTVTRVVVDN…NRIVVMTAAE (111 aa)).

Belongs to the outer membrane OOP (TC 1.B.6) superfamily. Disulfide-linked heterodimer with Omp41.

The protein resides in the cell outer membrane. May have porin activity and function in peptidoglycan binding. In Porphyromonas gingivalis (strain ATCC BAA-308 / W83), this protein is Outer membrane protein 40.